Reading from the N-terminus, the 855-residue chain is DNA mismatch repair protein MutS (855 aa).

615–622 (GPNMGGKS) contributes to the ATP binding site.

Belongs to the DNA mismatch repair MutS family.

Functionally, this protein is involved in the repair of mismatches in DNA. It is possible that it carries out the mismatch recognition step. This protein has a weak ATPase activity. The sequence is that of DNA mismatch repair protein MutS from Aliivibrio salmonicida (strain LFI1238) (Vibrio salmonicida (strain LFI1238)).